A 437-amino-acid polypeptide reads, in one-letter code: GTPase Der (437 aa).

EngA-type G domains follow at residues 3–168 and 178–353; these read PLIA…PVQE and TNLA…ENRS. GTP-binding positions include 9–16, 56–60, 120–123, 184–191, 231–235, and 296–299; these read GRPNVGKS, DTGGY, NKVE, DTAGL, and NKWD. The KH-like domain maps to 354-437; the sequence is RKITTSALNR…VTVSLRFFKK (84 aa).

This sequence belongs to the TRAFAC class TrmE-Era-EngA-EngB-Septin-like GTPase superfamily. EngA (Der) GTPase family. In terms of assembly, associates with the 50S ribosomal subunit.

Functionally, GTPase that plays an essential role in the late steps of ribosome biogenesis. This Chlorobium phaeobacteroides (strain DSM 266 / SMG 266 / 2430) protein is GTPase Der.